Consider the following 903-residue polypeptide: Protein translocase subunit SecA (903 aa).

ATP-binding positions include Gln87, 105–109 (GEGKT), and Asp507. Residues 854–893 (STMADSSGDVKSSTAESKAPYVRDGRKVGRNEPCPCGSGK) form a disordered region. Polar residues predominate over residues 856–869 (MADSSGDVKSSTAE). Residues 874–883 (YVRDGRKVGR) show a composition bias toward basic and acidic residues. Residues Cys887, Cys889, Cys898, and His899 each contribute to the Zn(2+) site.

The protein belongs to the SecA family. Monomer and homodimer. Part of the essential Sec protein translocation apparatus which comprises SecA, SecYEG and auxiliary proteins SecDF-YajC and YidC. Zn(2+) serves as cofactor.

The protein localises to the cell inner membrane. The protein resides in the cytoplasm. It catalyses the reaction ATP + H2O + cellular proteinSide 1 = ADP + phosphate + cellular proteinSide 2.. Functionally, part of the Sec protein translocase complex. Interacts with the SecYEG preprotein conducting channel. Has a central role in coupling the hydrolysis of ATP to the transfer of proteins into and across the cell membrane, serving both as a receptor for the preprotein-SecB complex and as an ATP-driven molecular motor driving the stepwise translocation of polypeptide chains across the membrane. This chain is Protein translocase subunit SecA, found in Nitrosococcus oceani (strain ATCC 19707 / BCRC 17464 / JCM 30415 / NCIMB 11848 / C-107).